We begin with the raw amino-acid sequence, 107 residues long: MEPYAVIQTGNKQYQVRKGDVIDVELLDGISEENKEVLFQDVLFTFDGEKASVGAPTVGNAVVKGELVSFVRGEKVVAYKYKKRKNYHKKIGHRQNYLRVKISDLVM.

It belongs to the bacterial ribosomal protein bL21 family. Part of the 50S ribosomal subunit. Contacts protein L20.

This protein binds to 23S rRNA in the presence of protein L20. The protein is Large ribosomal subunit protein bL21 of Chlamydia trachomatis serovar L2 (strain ATCC VR-902B / DSM 19102 / 434/Bu).